The primary structure comprises 504 residues: Flavin-dependent halogenase armH3 (504 aa).

The FAD site is built by Gly-16, Ala-19, Glu-49, and Ala-149. Positions 329 and 330 each coordinate chloride. Ile-331 contributes to the FAD binding site. The segment at 444–475 (NNLRTPVDTGAADVKAKHAPSETDAQNPLQSM) is disordered.

This sequence belongs to the flavin-dependent halogenase family.

It catalyses the reaction melleolide F + FADH2 + chloride + O2 = 6'-chloromelleolide F + FAD + 2 H2O + H(+). Flavin-dependent halogenase involved in the biosynthesis of melleolides, a range of antifungal and phytotoxic polyketide derivatives composed of an orsellinic acid (OA) moiety esterified to various sesquiterpene alcohols. The halogenase catalyzes the transfer of a single chlorine atom to the melleolide backbone, resulting in a 6'-chloromelleolide product. The enzyme acts on free substrate and does not depend on carrier-protein-dependent acceptor molecules. This is Flavin-dependent halogenase armH3 from Armillaria mellea (Honey mushroom).